Consider the following 87-residue polypeptide: Cobalt transport protein CbiN (87 aa).

Transmembrane regions (helical) follow at residues leucine 4–glycine 24 and methionine 58–tyrosine 78.

This sequence belongs to the CbiN family. In terms of assembly, forms an energy-coupling factor (ECF) transporter complex composed of an ATP-binding protein (A component, CbiO), a transmembrane protein (T component, CbiQ) and 2 possible substrate-capture proteins (S components, CbiM and CbiN) of unknown stoichimetry.

The protein resides in the cell membrane. Its pathway is cofactor biosynthesis; adenosylcobalamin biosynthesis. Part of the energy-coupling factor (ECF) transporter complex CbiMNOQ involved in cobalt import. The sequence is that of Cobalt transport protein CbiN from Archaeoglobus fulgidus (strain ATCC 49558 / DSM 4304 / JCM 9628 / NBRC 100126 / VC-16).